The chain runs to 396 residues: Alanine racemase (396 aa).

Lys-46 serves as the catalytic Proton acceptor; specific for D-alanine. Lys-46 is modified (N6-(pyridoxal phosphate)lysine). Arg-145 contacts substrate. Tyr-280 functions as the Proton acceptor; specific for L-alanine in the catalytic mechanism. Substrate is bound at residue Met-328.

This sequence belongs to the alanine racemase family. It depends on pyridoxal 5'-phosphate as a cofactor.

It catalyses the reaction L-alanine = D-alanine. Its pathway is amino-acid biosynthesis; D-alanine biosynthesis; D-alanine from L-alanine: step 1/1. In terms of biological role, catalyzes the interconversion of L-alanine and D-alanine. May also act on other amino acids. In Brucella canis (strain ATCC 23365 / NCTC 10854 / RM-666), this protein is Alanine racemase (alr).